A 300-amino-acid chain; its full sequence is Ribosomal protein L11 methyltransferase (300 aa).

Thr-152, Gly-173, Asp-195, and Asn-234 together coordinate S-adenosyl-L-methionine.

Belongs to the methyltransferase superfamily. PrmA family.

It localises to the cytoplasm. It carries out the reaction L-lysyl-[protein] + 3 S-adenosyl-L-methionine = N(6),N(6),N(6)-trimethyl-L-lysyl-[protein] + 3 S-adenosyl-L-homocysteine + 3 H(+). In terms of biological role, methylates ribosomal protein L11. This is Ribosomal protein L11 methyltransferase from Burkholderia multivorans (strain ATCC 17616 / 249).